Reading from the N-terminus, the 57-residue chain is Potassium channel toxin alpha-KTx 1.5 (57 aa).

Residues 1–20 form the signal peptide; the sequence is MKISFLLLALVICSIGWSEA. Pyrrolidone carboxylic acid is present on glutamine 21. 3 cysteine pairs are disulfide-bonded: cysteine 27/cysteine 48, cysteine 33/cysteine 53, and cysteine 37/cysteine 55.

Belongs to the short scorpion toxin superfamily. Potassium channel inhibitor family. Alpha-KTx 01 subfamily. As to expression, expressed by the venom gland.

Its subcellular location is the secreted. Potent blocker of both large-conductance calcium-activated potassium channels (KCa1.1/KCNMA1) and voltage-gated potassium channels (Kv1.3/KCNA3). Has also been shown to moderately inhibit Kv1.2/KCNA2 and weakly inhibit Kv1.1/KCNA1 channels, as well as 5-hydroxytryptamine 3 receptors (HTR3A). In Olivierus martensii (Manchurian scorpion), this protein is Potassium channel toxin alpha-KTx 1.5.